The chain runs to 361 residues: Peptide chain release factor 1 (361 aa).

At Q237 the chain carries N5-methylglutamine.

It belongs to the prokaryotic/mitochondrial release factor family. Methylated by PrmC. Methylation increases the termination efficiency of RF1.

Its subcellular location is the cytoplasm. Peptide chain release factor 1 directs the termination of translation in response to the peptide chain termination codons UAG and UAA. The polypeptide is Peptide chain release factor 1 (Thioalkalivibrio sulfidiphilus (strain HL-EbGR7)).